We begin with the raw amino-acid sequence, 254 residues long: Flavin-dependent thymidylate synthase (254 aa).

The 231-residue stretch at 7–237 folds into the ThyX domain; it reads LRVQLIARTE…PAVFADFEIY (231 aa). Residues Ser71, 95-97, and Gln103 contribute to the FAD site; that span reads RHR. DUMP is bound by residues 92–95, 103–107, and Arg176; these read ELIR and QLSQR. The ThyX motif motif lies at 95 to 105; that stretch reads RHRHFSYSQLS. Residues 192 to 194 and His198 contribute to the FAD site; that span reads NYR. Arg203 is a binding site for dUMP. Arg203 functions as the Involved in ionization of N3 of dUMP, leading to its activation in the catalytic mechanism.

The protein belongs to the thymidylate synthase ThyX family. Homotetramer. FAD is required as a cofactor.

It catalyses the reaction dUMP + (6R)-5,10-methylene-5,6,7,8-tetrahydrofolate + NADPH + H(+) = dTMP + (6S)-5,6,7,8-tetrahydrofolate + NADP(+). It participates in pyrimidine metabolism; dTTP biosynthesis. In terms of biological role, catalyzes the reductive methylation of 2'-deoxyuridine-5'-monophosphate (dUMP) to 2'-deoxythymidine-5'-monophosphate (dTMP) while utilizing 5,10-methylenetetrahydrofolate (mTHF) as the methyl donor, and NADPH and FADH(2) as the reductant. The protein is Flavin-dependent thymidylate synthase of Mycobacterium sp. (strain JLS).